We begin with the raw amino-acid sequence, 61 residues long: Small ribosomal subunit protein uS14C (61 aa).

Zn(2+) is bound by residues C24, C27, C40, and C43.

Belongs to the universal ribosomal protein uS14 family. Zinc-binding uS14 subfamily. In terms of assembly, part of the 30S ribosomal subunit. Contacts proteins S3 and S10. The cofactor is Zn(2+).

Binds 16S rRNA, required for the assembly of 30S particles and may also be responsible for determining the conformation of the 16S rRNA at the A site. The sequence is that of Small ribosomal subunit protein uS14C from Bacillus licheniformis (strain ATCC 14580 / DSM 13 / JCM 2505 / CCUG 7422 / NBRC 12200 / NCIMB 9375 / NCTC 10341 / NRRL NRS-1264 / Gibson 46).